Reading from the N-terminus, the 200-residue chain is Recombination protein RecR (200 aa).

The segment at 59-74 adopts a C4-type zinc-finger fold; the sequence is CEVCGNVCESSPCTIC. The 96-residue stretch at 82 to 177 folds into the Toprim domain; the sequence is GTICVVEEPK…KVTRLASGLP (96 aa).

Belongs to the RecR family.

Functionally, may play a role in DNA repair. It seems to be involved in an RecBC-independent recombinational process of DNA repair. It may act with RecF and RecO. In Bifidobacterium animalis subsp. lactis (strain AD011), this protein is Recombination protein RecR.